A 519-amino-acid polypeptide reads, in one-letter code: Exodeoxyribonuclease 7 large subunit (519 aa).

The tract at residues 500-519 (VGRGKTRKPKEEPPAQGSLL) is disordered.

The protein belongs to the XseA family. Heterooligomer composed of large and small subunits.

The protein resides in the cytoplasm. It carries out the reaction Exonucleolytic cleavage in either 5'- to 3'- or 3'- to 5'-direction to yield nucleoside 5'-phosphates.. Bidirectionally degrades single-stranded DNA into large acid-insoluble oligonucleotides, which are then degraded further into small acid-soluble oligonucleotides. The sequence is that of Exodeoxyribonuclease 7 large subunit from Cereibacter sphaeroides (strain KD131 / KCTC 12085) (Rhodobacter sphaeroides).